A 371-amino-acid polypeptide reads, in one-letter code: Vasopressin V2 receptor (371 aa).

At 1–38 the chain is on the extracellular side; that stretch reads MLLVSTVSAVPGLFSPPSSPSNSSQEELLDDRDPLLVR. Asn22 carries N-linked (GlcNAc...) asparagine glycosylation. A helical transmembrane segment spans residues 39–63; the sequence is AELALLSTIFVAVALSNGLVLGALI. The Cytoplasmic portion of the chain corresponds to 64–77; sequence RRGRRGRWAPMHVF. Residues 78–98 form a helical membrane-spanning segment; sequence ISHLCLADLAVALFQVLPQLA. Topologically, residues 99–113 are extracellular; that stretch reads WDATDRFHGPDALCR. Residues 114–135 form a helical membrane-spanning segment; sequence AVKYLQMVGMYASSYMILAMTL. Topologically, residues 136 to 159 are cytoplasmic; the sequence is DRHRAICRPMLAYRHGGGARWNRP. Residues 160–180 traverse the membrane as a helical segment; that stretch reads VLVAWAFSLLLSLPQLFIFAQ. Topologically, residues 181–200 are extracellular; that stretch reads RDVGNGSGVFDCWARFAEPW. Asn185 carries an N-linked (GlcNAc...) asparagine glycan. Residues 201 to 220 form a helical membrane-spanning segment; the sequence is GLRAYVTWIALMVFVAPALG. The Cytoplasmic portion of the chain corresponds to 221-271; that stretch reads IAACQVLIFREIHASLVPGPSERAGRRRRGRRTGSPSEGAHVSAAMAKTVR. The disordered stretch occupies residues 240–260; it reads PSERAGRRRRGRRTGSPSEGA. A helical membrane pass occupies residues 272–293; the sequence is MTLVIVIVYVLCWAPFFLVQLW. At 294–308 the chain is on the extracellular side; that stretch reads AAWDPEAPLERPPFV. Residues 309–328 traverse the membrane as a helical segment; the sequence is LLMLLASLNSCTNPWIYASF. Residues 329–371 are Cytoplasmic-facing; sequence SSSVSSELRSLLCCAQRHTTHSLGPQDESCATASSSLMKDTPS. Residues Cys341 and Cys342 are each lipidated (S-palmitoyl cysteine). Residues 349-371 are disordered; that stretch reads HSLGPQDESCATASSSLMKDTPS. A compositionally biased stretch (polar residues) spans 357–371; sequence SCATASSSLMKDTPS.

This sequence belongs to the G-protein coupled receptor 1 family. Vasopressin/oxytocin receptor subfamily. As to quaternary structure, interacts with ARRDC4. Identified in a complex containing at least ARRDC4, V2R and HGS. Interacts with TMEM147. Kidney.

Its subcellular location is the cell membrane. Functionally, receptor for arginine vasopressin. The activity of this receptor is mediated by G proteins which activate adenylate cyclase. Involved in renal water reabsorption. This chain is Vasopressin V2 receptor (Avpr2), found in Rattus norvegicus (Rat).